Reading from the N-terminus, the 186-residue chain is Peptidyl-tRNA hydrolase (186 aa).

Y14 is a tRNA binding site. The Proton acceptor role is filled by H19. Positions 64, 66, and 112 each coordinate tRNA.

The protein belongs to the PTH family. As to quaternary structure, monomer.

It is found in the cytoplasm. It catalyses the reaction an N-acyl-L-alpha-aminoacyl-tRNA + H2O = an N-acyl-L-amino acid + a tRNA + H(+). Functionally, hydrolyzes ribosome-free peptidyl-tRNAs (with 1 or more amino acids incorporated), which drop off the ribosome during protein synthesis, or as a result of ribosome stalling. In terms of biological role, catalyzes the release of premature peptidyl moieties from peptidyl-tRNA molecules trapped in stalled 50S ribosomal subunits, and thus maintains levels of free tRNAs and 50S ribosomes. This is Peptidyl-tRNA hydrolase from Bacillus cereus (strain ATCC 10987 / NRS 248).